The chain runs to 210 residues: Na(+)-translocating NADH-quinone reductase subunit D (210 aa).

A run of 5 helical transmembrane segments spans residues 42–62 (FVMTLAVTAVTAFSNLFISLI), 72–92 (IIAQMAVIASLVIVVDQVLKA), 103–123 (VFVGLIITNCIVMGRAEAYAM), 131–151 (FLDGIGNGLGYGAVLLTVATV), and 178–198 (NGLLLLPPSAFFIIGLIIWGV).

It belongs to the NqrDE/RnfAE family. In terms of assembly, composed of six subunits; NqrA, NqrB, NqrC, NqrD, NqrE and NqrF.

It localises to the cell inner membrane. The catalysed reaction is a ubiquinone + n Na(+)(in) + NADH + H(+) = a ubiquinol + n Na(+)(out) + NAD(+). NQR complex catalyzes the reduction of ubiquinone-1 to ubiquinol by two successive reactions, coupled with the transport of Na(+) ions from the cytoplasm to the periplasm. NqrA to NqrE are probably involved in the second step, the conversion of ubisemiquinone to ubiquinol. The chain is Na(+)-translocating NADH-quinone reductase subunit D from Aeromonas hydrophila subsp. hydrophila (strain ATCC 7966 / DSM 30187 / BCRC 13018 / CCUG 14551 / JCM 1027 / KCTC 2358 / NCIMB 9240 / NCTC 8049).